The sequence spans 344 residues: Dihydroorotase (344 aa).

Residues histidine 14 and histidine 16 each coordinate Zn(2+). Residues histidine 16–arginine 18 and asparagine 42 each bind substrate. Zn(2+) is bound by residues lysine 100, histidine 137, and histidine 175. N6-carboxylysine is present on lysine 100. Substrate is bound at residue histidine 137. Leucine 220 is a binding site for substrate. Aspartate 248 provides a ligand contact to Zn(2+). The active site involves aspartate 248. Residues histidine 252 and alanine 264 each contribute to the substrate site.

It belongs to the metallo-dependent hydrolases superfamily. DHOase family. Class II DHOase subfamily. In terms of assembly, homodimer. The cofactor is Zn(2+).

It carries out the reaction (S)-dihydroorotate + H2O = N-carbamoyl-L-aspartate + H(+). It participates in pyrimidine metabolism; UMP biosynthesis via de novo pathway; (S)-dihydroorotate from bicarbonate: step 3/3. Functionally, catalyzes the reversible cyclization of carbamoyl aspartate to dihydroorotate. This is Dihydroorotase from Alcanivorax borkumensis (strain ATCC 700651 / DSM 11573 / NCIMB 13689 / SK2).